The following is a 246-amino-acid chain: Octanoyltransferase (246 aa).

A BPL/LPL catalytic domain is found at 50 to 231 (PDTDDEIWVV…RLIAHLDGAT (182 aa)). Residues 90–97 (RGGQITYH), 162–164 (ALG), and 175–177 (GLS) contribute to the substrate site. C193 serves as the catalytic Acyl-thioester intermediate.

This sequence belongs to the LipB family.

It localises to the cytoplasm. The catalysed reaction is octanoyl-[ACP] + L-lysyl-[protein] = N(6)-octanoyl-L-lysyl-[protein] + holo-[ACP] + H(+). It functions in the pathway protein modification; protein lipoylation via endogenous pathway; protein N(6)-(lipoyl)lysine from octanoyl-[acyl-carrier-protein]: step 1/2. Functionally, catalyzes the transfer of endogenously produced octanoic acid from octanoyl-acyl-carrier-protein onto the lipoyl domains of lipoate-dependent enzymes. Lipoyl-ACP can also act as a substrate although octanoyl-ACP is likely to be the physiological substrate. In Burkholderia pseudomallei (strain 1106a), this protein is Octanoyltransferase.